The sequence spans 738 residues: Propionyl-CoA carboxylase alpha chain, mitochondrial (738 aa).

The region spanning 62–509 is the Biotin carboxylation domain; the sequence is KFDKILIANR…TTKYLPEVYP (448 aa). ATP contacts are provided by residues Lys177, 209–270, Glu261, and Asn296; that span reads SREI…PRHI. Residues 181–378 form the ATP-grasp domain; the sequence is KKIATAARVS…IVQQMLRVAY (198 aa). 3 residues coordinate Mg(2+): Glu336, Glu349, and Asn351. Mn(2+) is bound by residues Glu336, Glu349, and Asn351. Arg353 is an active-site residue. Position 409 (Phe409) interacts with biotin. Residues 663 to 738 form the Biotinyl-binding domain; the sequence is KAKVDLSTVV…DEGEVLVELE (76 aa). An N6-biotinyllysine modification is found at Lys704.

In terms of assembly, the holoenzyme is a dodecamer composed of 6 alpha subunits and 6 beta subunits. Interacts with sir-2.2. Requires biotin as cofactor. Mg(2+) is required as a cofactor. Mn(2+) serves as cofactor. The biotin cofactor is covalently attached to the C-terminal biotinyl-binding domain and is required for the catalytic activity.

The protein resides in the mitochondrion matrix. It catalyses the reaction propanoyl-CoA + hydrogencarbonate + ATP = (S)-methylmalonyl-CoA + ADP + phosphate + H(+). It carries out the reaction butanoyl-CoA + hydrogencarbonate + ATP = (2S)-ethylmalonyl-CoA + ADP + phosphate + H(+). Its pathway is metabolic intermediate metabolism; propanoyl-CoA degradation; succinyl-CoA from propanoyl-CoA: step 1/3. This is one of the 2 subunits of the biotin-dependent propionyl-CoA carboxylase (PCC), a mitochondrial enzyme involved in the catabolism of odd chain fatty acids, branched-chain amino acids isoleucine, threonine, methionine, and valine and other metabolites. Propionyl-CoA carboxylase catalyzes the carboxylation of propionyl-CoA/propanoyl-CoA to D-methylmalonyl-CoA/(S)-methylmalonyl-CoA. Within the holoenzyme, the alpha subunit catalyzes the ATP-dependent carboxylation of the biotin carried by the biotin carboxyl carrier (BCC) domain, while the beta subunit then transfers the carboxyl group from carboxylated biotin to propionyl-CoA. Propionyl-CoA carboxylase also significantly acts on butyryl-CoA/butanoyl-CoA, which is converted to ethylmalonyl-CoA/(2S)-ethylmalonyl-CoA. Other alternative minor substrates include (2E)-butenoyl-CoA/crotonoyl-CoA. In Caenorhabditis briggsae, this protein is Propionyl-CoA carboxylase alpha chain, mitochondrial (pcca-1).